A 138-amino-acid chain; its full sequence is Putative nickel-responsive regulator (138 aa).

Ni(2+)-binding residues include H76, H87, H89, and C95.

It belongs to the transcriptional regulatory CopG/NikR family. Ni(2+) is required as a cofactor.

Functionally, transcriptional regulator. This chain is Putative nickel-responsive regulator, found in Pseudomonas putida (strain W619).